The following is a 144-amino-acid chain: Ribonuclease VapC45 (144 aa).

Residues Asp-7 and Asp-102 each contribute to the Mg(2+) site.

Belongs to the PINc/VapC protein family. Requires Mg(2+) as cofactor.

In terms of biological role, toxic component of a type II toxin-antitoxin (TA) system. An RNase. Its cognate antitoxin is VapB45. The polypeptide is Ribonuclease VapC45 (Mycobacterium tuberculosis (strain CDC 1551 / Oshkosh)).